A 44-amino-acid polypeptide reads, in one-letter code: Photosystem I reaction center subunit IX (44 aa).

A helical transmembrane segment spans residues 7–27 (YLSVAPVVSTIWFGALAGLLI).

The protein belongs to the PsaJ family.

It localises to the plastid. The protein resides in the chloroplast thylakoid membrane. Functionally, may help in the organization of the PsaE and PsaF subunits. This chain is Photosystem I reaction center subunit IX, found in Cucumis sativus (Cucumber).